A 311-amino-acid polypeptide reads, in one-letter code: MFKIVFFGTSTLSKKCLEQLFYDNDFEICAVVTQPDKINHRNNKIVPSDVKSFCLEKNITFFQPKQSISIKADLEKLKADIGICVSFGQYLHQDIIDLFPNKVINLHPSKLPLLRGGAPLHWTIINGFKKSALSVIQLVKKMDAGPIWKQQDFLVNNDWNTGDLSIYVEEHSPSFLIECTKEILNKKGKWFEQIGEPTFGLNIRKEQEHLDLNQIYKSFLNWVKGLAPKPGGWLSFEGKNIKIFKAKYVSKSNYKHQLGEIVNISRKGINIALKSNEIISIEKIQIPGKRVMEVSEIINGKHPFVVGKCFK.

109 to 112 (SKLP) contacts (6S)-5,6,7,8-tetrahydrofolate.

Belongs to the Fmt family.

The enzyme catalyses L-methionyl-tRNA(fMet) + (6R)-10-formyltetrahydrofolate = N-formyl-L-methionyl-tRNA(fMet) + (6S)-5,6,7,8-tetrahydrofolate + H(+). Functionally, attaches a formyl group to the free amino group of methionyl-tRNA(fMet). The formyl group appears to play a dual role in the initiator identity of N-formylmethionyl-tRNA by promoting its recognition by IF2 and preventing the misappropriation of this tRNA by the elongation apparatus. The polypeptide is Methionyl-tRNA formyltransferase (fmt) (Mycoplasma genitalium (strain ATCC 33530 / DSM 19775 / NCTC 10195 / G37) (Mycoplasmoides genitalium)).